The following is a 384-amino-acid chain: Isoafricanol synthase (384 aa).

4 residues coordinate Mg(2+): Asp-95, Asn-245, Ser-249, and Glu-253.

It belongs to the terpene synthase family. Requires Mg(2+) as cofactor.

The enzyme catalyses (2E,6E)-farnesyl diphosphate + H2O = (+)-isoafricanol + diphosphate. Its function is as follows. Catalyzes the cyclization of farnesyl diphosphate (FPP) to isoafricanol. This is Isoafricanol synthase from Streptomyces violaceusniger (strain Tu 4113).